We begin with the raw amino-acid sequence, 373 residues long: MSVKKINLLDLDRKGLRALFSEMGEKPFRADQLMKWVYHFGVTDFEEMNNINKVLRTKLAAKCEIVAPEIASFQKSNDGTIKFAINVGQGQEVETVYIPEEDRATLCVSSQVGCALECTFCSTGQQGFNRNLTVSEIIGQVWRVSQFLGFHKDTGDRPISNVVMMGMGEPLLNLANVIPAMDIMLDDFGFSLSKRRVTLSTSGVVPALDKLGDAIDVALAVSIHAPNDELRDVLVPVNKKYPLQEFLAGIRRYLEKSNANRGRVTVEYVMLDHINDSTDQAHELAILMKDTPCKINLIPFNPYPGSPYGRSSNSRIDRFSKVLMEHGLTVIVRKTRGDDIDAACGQLAGDIRDRTKRLAKKQMQQNQISVTME.

Glu94 functions as the Proton acceptor in the catalytic mechanism. The 240-residue stretch at 100 to 339 (EEDRATLCVS…VIVRKTRGDD (240 aa)) folds into the Radical SAM core domain. Residues Cys107 and Cys344 are joined by a disulfide bond. Residues Cys114, Cys118, and Cys121 each contribute to the [4Fe-4S] cluster site. Residues 168–169 (GE), Ser200, 222–224 (SIH), and Asn301 each bind S-adenosyl-L-methionine. Cys344 serves as the catalytic S-methylcysteine intermediate.

This sequence belongs to the radical SAM superfamily. RlmN family. [4Fe-4S] cluster is required as a cofactor.

The protein localises to the cytoplasm. It carries out the reaction adenosine(2503) in 23S rRNA + 2 reduced [2Fe-2S]-[ferredoxin] + 2 S-adenosyl-L-methionine = 2-methyladenosine(2503) in 23S rRNA + 5'-deoxyadenosine + L-methionine + 2 oxidized [2Fe-2S]-[ferredoxin] + S-adenosyl-L-homocysteine. The catalysed reaction is adenosine(37) in tRNA + 2 reduced [2Fe-2S]-[ferredoxin] + 2 S-adenosyl-L-methionine = 2-methyladenosine(37) in tRNA + 5'-deoxyadenosine + L-methionine + 2 oxidized [2Fe-2S]-[ferredoxin] + S-adenosyl-L-homocysteine. In terms of biological role, specifically methylates position 2 of adenine 2503 in 23S rRNA and position 2 of adenine 37 in tRNAs. m2A2503 modification seems to play a crucial role in the proofreading step occurring at the peptidyl transferase center and thus would serve to optimize ribosomal fidelity. This Shewanella frigidimarina (strain NCIMB 400) protein is Dual-specificity RNA methyltransferase RlmN.